Here is a 676-residue protein sequence, read N- to C-terminus: Long-chain-fatty-acid--CoA ligase 1 (676 aa).

246-257 contributes to the ATP binding site; the sequence is YTSGSTGLPKGV. Residues 511–560 carry the FACS motif; it reads DGWFRTGDVGELTPEGLLRIIDRKKNLVKTQNGEYIALEKLESRYRTSSL.

The protein belongs to the ATP-dependent AMP-binding enzyme family. Mg(2+) is required as a cofactor.

It carries out the reaction a long-chain fatty acid + ATP + CoA = a long-chain fatty acyl-CoA + AMP + diphosphate. In terms of biological role, esterification, concomitant with transport, of exogenous long-chain fatty acids into metabolically active CoA thioesters for subsequent degradation or incorporation into phospholipids. It may supplement intracellular myristoyl-CoA pools from exogenous myristate. Preferentially acts on C12:0-C16:0 fatty acids with myristic and pentadecanic acid (C15:0) having the highest activities. Appears to play a role in the maintenance of cell viability during stationary phase. In Schizosaccharomyces pombe (strain 972 / ATCC 24843) (Fission yeast), this protein is Long-chain-fatty-acid--CoA ligase 1 (lcf1).